Here is a 346-residue protein sequence, read N- to C-terminus: Immunoglobulin heavy constant alpha (346 aa).

Ig-like domains are found at residues 6 to 96, 118 to 212, and 221 to 323; these read PSIF…KSVD, PRLS…VSIT, and PQVH…KSID. C26 and C83 are disulfide-bonded. A glycan (N-linked (GlcNAc...) (complex) asparagine) is linked at N134. 2 disulfide bridges follow: C139/C196 and C243/C306. N333 is a glycosylation site (N-linked (GlcNAc...) (complex) asparagine).

In terms of assembly, immunoglobulins are composed of two identical heavy chains and two identical light chains; disulfide-linked. Monomeric or polymeric. Part of the secretory IgA (sIgA) complex that consists of two, four or five IgA monomers, and two additional non-Ig polypeptides, namely the JCHAIN and the secretory component (the proteolytic product of PIGR). In terms of processing, N-glycosylated. N-glycans attached to Asn-134 varies from differentially fucosylated complex and hybrid to sialylated with N-glycoyl neuraminic acid types: GlcNAc2Man3GlcNAc2(Fuc); GlcNAc1Man4GlcNAc2(Fuc); GlcNAc1Man4GlcNAc2; Gal1GlcNAc2Man3GlcNAc2(Fuc); GlcNAc2Man3GlcNAc2; Gal1GlcNAc2Man3GlcNAc2; GlcNAc1Man3GlcNAc2; GlcNAc1Man2GlcNAc2 and NeuGc1Gal1GlcNAc2Man3GlcNAc2(Fuc). N-glycans attached to Asn-333 are mainly fucosylated complex types: GlcNAc2Man3GlcNAc2; GlcNAc1Man3GlcNAc2; GlcNAc1Man3GlcNAc2(Fuc); GlcNAc2Man3GlcNAc2(Fuc); Gal1GlcNAc2Man3GlcNAc2(Fuc); NeuGc1Gal1GlcNAc1Man3GlcNAc2(Fuc); NeuGc1Gal1GlcNAc2Man3GlcNAc2(Fuc) and NeuAc1Gal1GlcNAc2Man3GlcNAc2(Fuc).

Its subcellular location is the secreted. The protein resides in the cell membrane. Functionally, constant region of immunoglobulin heavy chains. Immunoglobulins, also known as antibodies, are membrane-bound or secreted glycoproteins produced by B lymphocytes. In the recognition phase of humoral immunity, the membrane-bound immunoglobulins serve as receptors which, upon binding of a specific antigen, trigger the clonal expansion and differentiation of B lymphocytes into immunoglobulins-secreting plasma cells. Secreted immunoglobulins mediate the effector phase of humoral immunity, which results in the elimination of bound antigens. The antigen binding site is formed by the variable domain of one heavy chain, together with that of its associated light chain. Thus, each immunoglobulin has two antigen binding sites with remarkable affinity for a particular antigen. The variable domains are assembled by a process called V-(D)-J rearrangement and can then be subjected to somatic hypermutations which, after exposure to antigen and selection, allow affinity maturation for a particular antigen. Ig alpha is the major immunoglobulin class in body secretions. This chain is Immunoglobulin heavy constant alpha (IGHA), found in Equus asinus (Donkey).